Reading from the N-terminus, the 398-residue chain is GTPase Obg (398 aa).

The region spanning 1–159 (MKFVDEAPIS…RNLKLELKVL (159 aa)) is the Obg domain. The tract at residues 128–148 (TRFKSSTNRVPRKTTPGTEGE) is disordered. The region spanning 160–333 (ADVGMLGLPN…LSGKIMDHLE (174 aa)) is the OBG-type G domain. Residues 166-173 (GLPNAGKS), 191-195 (FTTLV), 213-216 (DIPG), 283-286 (NKID), and 314-316 (SAL) each bind GTP. Mg(2+)-binding residues include serine 173 and threonine 193.

Belongs to the TRAFAC class OBG-HflX-like GTPase superfamily. OBG GTPase family. As to quaternary structure, monomer. It depends on Mg(2+) as a cofactor.

Its subcellular location is the cytoplasm. In terms of biological role, an essential GTPase which binds GTP, GDP and possibly (p)ppGpp with moderate affinity, with high nucleotide exchange rates and a fairly low GTP hydrolysis rate. Plays a role in control of the cell cycle, stress response, ribosome biogenesis and in those bacteria that undergo differentiation, in morphogenesis control. This chain is GTPase Obg, found in Cellvibrio japonicus (strain Ueda107) (Pseudomonas fluorescens subsp. cellulosa).